The sequence spans 123 residues: Small ribosomal subunit protein uS12 (123 aa).

Residues 1-32 form a disordered region; it reads MPTIQQLVRKGRKDKKAKVKTAALKGSPQRRG. A compositionally biased stretch (basic residues) spans 9-19; sequence RKGRKDKKAKV. 3-methylthioaspartic acid is present on Asp89.

This sequence belongs to the universal ribosomal protein uS12 family. Part of the 30S ribosomal subunit. Contacts proteins S8 and S17. May interact with IF1 in the 30S initiation complex.

With S4 and S5 plays an important role in translational accuracy. Its function is as follows. Interacts with and stabilizes bases of the 16S rRNA that are involved in tRNA selection in the A site and with the mRNA backbone. Located at the interface of the 30S and 50S subunits, it traverses the body of the 30S subunit contacting proteins on the other side and probably holding the rRNA structure together. The combined cluster of proteins S8, S12 and S17 appears to hold together the shoulder and platform of the 30S subunit. This is Small ribosomal subunit protein uS12 from Corynebacterium kroppenstedtii (strain DSM 44385 / JCM 11950 / CIP 105744 / CCUG 35717).